Reading from the N-terminus, the 785-residue chain is Solute carrier family 45 member 4 (785 aa).

Residues 1–43 (MKMAPQNADSESMQVQELPVPLPDPQKPRDPEAETQEETTSEG) are disordered. Helical transmembrane passes span 64-84 (EFCY…IGLP), 87-107 (YYSL…PLIG), 124-144 (ILAL…GSAI), 156-176 (PIGI…ADAT), 197-217 (LNIH…LGGL), and 234-254 (VLFF…LFSI). 2 disordered regions span residues 259–309 (YSPQ…VQSE) and 401–430 (KVPN…SGSM). Phosphoserine is present on residues S442 and S472. Residues 478–505 (DLQQRQRSRHRNQSGATASSGDTESEEG) are disordered. A compositionally biased stretch (low complexity) spans 490–499 (QSGATASSGD). S502 is subject to Phosphoserine. 6 consecutive transmembrane segments (helical) span residues 525-545 (LMWL…EAVF), 577-597 (MGCW…ALLQ), 609-629 (IIYM…AMFP), 631-651 (VYVA…ISYC), 683-703 (ILSC…GGVV), and 709-729 (IVVI…TATF). The segment at 741-772 (KEEQKGLSSGPAGEGEGGAGSEKPTVLKLSRK) is disordered. S749 carries the post-translational modification Phosphoserine.

Belongs to the glycoside-pentoside-hexuronide (GPH) cation symporter transporter (TC 2.A.2) family. In terms of tissue distribution, ubiquitously expressed.

The protein localises to the membrane. The catalysed reaction is sucrose(out) + H(+)(out) = sucrose(in) + H(+)(in). Proton-associated sucrose transporter. May be able to transport also glucose and fructose. The chain is Solute carrier family 45 member 4 (Slc45a4) from Mus musculus (Mouse).